Reading from the N-terminus, the 546-residue chain is Putative serine/threonine-protein kinase L268 (546 aa).

One can recognise a Cyclin N-terminal domain in the interval 1–112 (MVCFSKYSGI…ILQTLDFHLV (112 aa)). A Protein kinase domain is found at 260–544 (ITVVKNLGEG…QTLEEFNKFN (285 aa)). ATP is bound by residues 266 to 274 (LGEGTYGTV) and lysine 287. The Proton acceptor role is filled by aspartate 389.

Belongs to the protein kinase superfamily. Ser/Thr protein kinase family.

The catalysed reaction is L-seryl-[protein] + ATP = O-phospho-L-seryl-[protein] + ADP + H(+). The enzyme catalyses L-threonyl-[protein] + ATP = O-phospho-L-threonyl-[protein] + ADP + H(+). This is Putative serine/threonine-protein kinase L268 from Acanthamoeba polyphaga mimivirus (APMV).